The chain runs to 102 residues: Aspartyl/glutamyl-tRNA(Asn/Gln) amidotransferase subunit C (102 aa).

The protein belongs to the GatC family. In terms of assembly, heterotrimer of A, B and C subunits.

The enzyme catalyses L-glutamyl-tRNA(Gln) + L-glutamine + ATP + H2O = L-glutaminyl-tRNA(Gln) + L-glutamate + ADP + phosphate + H(+). It carries out the reaction L-aspartyl-tRNA(Asn) + L-glutamine + ATP + H2O = L-asparaginyl-tRNA(Asn) + L-glutamate + ADP + phosphate + 2 H(+). Allows the formation of correctly charged Asn-tRNA(Asn) or Gln-tRNA(Gln) through the transamidation of misacylated Asp-tRNA(Asn) or Glu-tRNA(Gln) in organisms which lack either or both of asparaginyl-tRNA or glutaminyl-tRNA synthetases. The reaction takes place in the presence of glutamine and ATP through an activated phospho-Asp-tRNA(Asn) or phospho-Glu-tRNA(Gln). The sequence is that of Aspartyl/glutamyl-tRNA(Asn/Gln) amidotransferase subunit C from Bordetella pertussis (strain Tohama I / ATCC BAA-589 / NCTC 13251).